We begin with the raw amino-acid sequence, 865 residues long: Eukaryotic translation initiation factor 3 subunit C (865 aa).

Disordered stretches follow at residues 1 to 92 (MSRF…AKDK) and 206 to 243 (EDEE…VGKG). Composition is skewed to acidic residues over residues 16–54 (SSDE…DSDA) and 69–80 (DDDSSDEEDSDA). Residues 82-92 (VTTKVKSAKDK) show a composition bias toward basic and acidic residues. Over residues 226–235 (ATAEDEEDDE) the composition is skewed to acidic residues. A PCI domain is found at 606-780 (FHMHINLELL…QTVIFRKGVE (175 aa)). Residues 801–865 (SNERTLEQRT…GGALGAAVRA (65 aa)) are disordered. A compositionally biased stretch (polar residues) spans 808-817 (QRTQGTSNAF). A compositionally biased stretch (gly residues) spans 822 to 841 (GRGGRGGGRGRGGGRGGPRF).

The protein belongs to the eIF-3 subunit C family. In terms of assembly, component of the eukaryotic translation initiation factor 3 (eIF-3) complex.

Its subcellular location is the cytoplasm. In terms of biological role, component of the eukaryotic translation initiation factor 3 (eIF-3) complex, which is involved in protein synthesis of a specialized repertoire of mRNAs and, together with other initiation factors, stimulates binding of mRNA and methionyl-tRNAi to the 40S ribosome. The eIF-3 complex specifically targets and initiates translation of a subset of mRNAs involved in cell proliferation. This is Eukaryotic translation initiation factor 3 subunit C from Pyricularia oryzae (strain 70-15 / ATCC MYA-4617 / FGSC 8958) (Rice blast fungus).